The chain runs to 374 residues: UPF0754 membrane protein SAR1937 (374 aa).

2 consecutive transmembrane segments (helical) span residues 4–24 and 354–374; these read LFII…TNVI and SLGF…AIFV.

It belongs to the UPF0754 family.

It localises to the cell membrane. In Staphylococcus aureus (strain MRSA252), this protein is UPF0754 membrane protein SAR1937.